Here is a 270-residue protein sequence, read N- to C-terminus: Diaminopimelate epimerase (270 aa).

Substrate contacts are provided by Asn-15, Gln-49, and Asn-66. Cys-75 (proton donor) is an active-site residue. Substrate is bound by residues Gly-76–Asn-77, Asn-155, Asn-187, and Glu-204–Arg-205. Cys-213 (proton acceptor) is an active-site residue. Residue Gly-214–Ser-215 coordinates substrate.

Belongs to the diaminopimelate epimerase family. In terms of assembly, homodimer.

The protein localises to the cytoplasm. The enzyme catalyses (2S,6S)-2,6-diaminopimelate = meso-2,6-diaminopimelate. Its pathway is amino-acid biosynthesis; L-lysine biosynthesis via DAP pathway; DL-2,6-diaminopimelate from LL-2,6-diaminopimelate: step 1/1. Its function is as follows. Catalyzes the stereoinversion of LL-2,6-diaminopimelate (L,L-DAP) to meso-diaminopimelate (meso-DAP), a precursor of L-lysine and an essential component of the bacterial peptidoglycan. The sequence is that of Diaminopimelate epimerase from Rickettsia felis (strain ATCC VR-1525 / URRWXCal2) (Rickettsia azadi).